The primary structure comprises 117 residues: Large ribosomal subunit protein bL20c (117 aa).

Belongs to the bacterial ribosomal protein bL20 family.

It is found in the plastid. Its subcellular location is the chloroplast. Binds directly to 23S ribosomal RNA and is necessary for the in vitro assembly process of the 50S ribosomal subunit. It is not involved in the protein synthesizing functions of that subunit. The chain is Large ribosomal subunit protein bL20c from Aethionema grandiflorum (Persian stone-cress).